Consider the following 728-residue polypeptide: Catalase-peroxidase 2 (728 aa).

The interval 1–20 (MSNEGKCPFNHGKRNGTTNR) is disordered. Positions 91–214 (WHSAGTYRTG…LAAVQMGLIY (124 aa)) form a cross-link, tryptophyl-tyrosyl-methioninium (Trp-Tyr) (with M-240). Catalysis depends on histidine 92, which acts as the Proton acceptor. Residues 214-240 (YVNPEGPNGNPDPLASARDIRETFARM) constitute a cross-link (tryptophyl-tyrosyl-methioninium (Tyr-Met) (with W-91)). Histidine 255 is a heme b binding site. The tract at residues 335–355 (AHQWQPKGGAGADSVPDPFEP) is disordered.

Belongs to the peroxidase family. Peroxidase/catalase subfamily. In terms of assembly, homodimer or homotetramer. Requires heme b as cofactor. Post-translationally, formation of the three residue Trp-Tyr-Met cross-link is important for the catalase, but not the peroxidase activity of the enzyme.

The catalysed reaction is H2O2 + AH2 = A + 2 H2O. It carries out the reaction 2 H2O2 = O2 + 2 H2O. In terms of biological role, bifunctional enzyme with both catalase and broad-spectrum peroxidase activity. The chain is Catalase-peroxidase 2 from Burkholderia cenocepacia (strain HI2424).